Here is a 206-residue protein sequence, read N- to C-terminus: Small ribosomal subunit protein uS4c (206 aa).

Positions 94–152 constitute an S4 RNA-binding domain; that stretch reads MRLDNIVFRLGMAPTIPAARQLVNHRHILVNDFTVNIPSYSCKLGDKISVQKRFESKTN.

It belongs to the universal ribosomal protein uS4 family. Part of the 30S ribosomal subunit. Contacts protein S5. The interaction surface between S4 and S5 is involved in control of translational fidelity.

The protein resides in the plastid. It is found in the chloroplast. In terms of biological role, one of the primary rRNA binding proteins, it binds directly to 16S rRNA where it nucleates assembly of the body of the 30S subunit. Its function is as follows. With S5 and S12 plays an important role in translational accuracy. The chain is Small ribosomal subunit protein uS4c (rps4) from Chara vulgaris (Common stonewort).